The sequence spans 251 residues: Chloride intracellular channel protein 5 (251 aa).

Residues 1-98 (MTDSATTNGD…EEFLEETLTP (98 aa)) are required for insertion into the membrane. The G-site motif lies at 32-35 (CPFS). Residues 34 to 54 (FSQRLFMILWLKGVVFNVTTV) form a helical membrane-spanning segment. Residues 101 to 241 (YPKLAAKHRE…AADSEIELAY (141 aa)) form the GST C-terminal domain.

It belongs to the chloride channel CLIC family. As to quaternary structure, component of a multimeric complex consisting of several cytoskeletal proteins, including actin, ezrin, alpha-actinin, gelsolin, and IQGAP1. Interacts with AKAP9. Interacts with TPRN. TPRN, CLIC5 and PTPQR form concentric rings at the base of stereocilia and may form a complex. Interacts with EZR, MYO6 and RDX; the proteins may work together as a complex to stabilize linkages between the plasma membrane and subjacent actin cytoskeleton at the stereocilium base. Detected in lung and inner ear. Detected in embryonic cochlea, on microvilli-covered apical surfaces of interdental cells, columnar cells of Kolliker's organ, and on stereocilia of inner and outer hair cells (at protein level). Also detected in the eye, where it localizes to lens fiber cells in the lens epithelium (at protein level).

It is found in the golgi apparatus. It localises to the cytoplasm. Its subcellular location is the cytoskeleton. The protein resides in the microtubule organizing center. The protein localises to the centrosome. It is found in the cell cortex. It localises to the membrane. Its subcellular location is the apical cell membrane. The protein resides in the mitochondrion. The protein localises to the cell projection. It is found in the stereocilium. It catalyses the reaction Na(+)(in) = Na(+)(out). The catalysed reaction is K(+)(in) = K(+)(out). It carries out the reaction chloride(in) = chloride(out). Inhibited by F-actin. Functionally, in the soluble state, catalyzes glutaredoxin-like thiol disulfide exchange reactions with reduced glutathione as electron donor. Can insert into membranes and form non-selective ion channels almost equally permeable to Na(+), K(+) and Cl(-). Required for normal hearing. Necessary for the formation of stereocilia in the inner ear and normal development of the organ of Corti. Required for the proper localization of PTPRQ and RDX to the stereocilium base during postnatal maturation of hair bundles. Can insert into membranes and form poorly selective ion channels that may also transport chloride ions. Required for the development and/or maintenance of the proper glomerular endothelial cell and podocyte architecture. Plays a role in formation of the lens suture in the eye, which is important for normal optical properties of the lens. The sequence is that of Chloride intracellular channel protein 5 (Clic5) from Mus musculus (Mouse).